An 825-amino-acid chain; its full sequence is Interleukin-4 receptor subunit alpha (825 aa).

The signal sequence occupies residues 1–25 (MGWLCSGLLFPVSCLVLLQVASSGN). At 26–232 (MKVLQEPTCV…NSYREPFEQH (207 aa)) the chain is on the extracellular side. A disulfide bridge links Cys-34 with Cys-44. Residue Asn-53 is glycosylated (N-linked (GlcNAc...) asparagine). Cys-74 and Cys-86 are joined by a disulfide. N-linked (GlcNAc...) asparagine glycosylation is found at Asn-98, Asn-128, Asn-134, Asn-176, and Asn-209. Residues 125–224 (APGNLTVHTN…WSPSTKWHNS (100 aa)) form the Fibronectin type-III domain. Residues 212-216 (WSEWS) carry the WSXWS motif motif. Residues 233-256 (LLLGVSVSCIVILAVCLLCYVSIT) form a helical membrane-spanning segment. Over 257–825 (KIKKEWWDQI…SVGPTYMRVS (569 aa)) the chain is Cytoplasmic. The Box 1 motif signature appears at 262–270 (WWDQIPNPA). Disordered stretches follow at residues 373-397 (EEEE…DFQE) and 433-485 (LPPS…LTCT). The segment at 437 to 557 (GSTSAHMPWD…ETWEQILRRN (121 aa)) is required for IRS1 activation and IL4-induced cell growth. The segment covering 475 to 485 (PTQSPDNLTCT) has biased composition (polar residues). Residues Tyr-497, Tyr-575, Tyr-603, and Tyr-631 each carry the phosphotyrosine modification. The required for IL4-induced gene expression stretch occupies residues 558 to 657 (VLQHGAAAAP…VPVPLFTFGL (100 aa)). The interval 651-703 (PLFTFGLDREPPRSPQSSHLPSSSPEHLGLEPGEKVEDMPKPPLPQEQATDPL) is disordered. Over residues 665 to 677 (PQSSHLPSSSPEH) the composition is skewed to low complexity. A compositionally biased stretch (basic and acidic residues) spans 678–690 (LGLEPGEKVEDMP). Residues 711–716 (IVYSAL) carry the ITIM motif motif. Positions 782–809 (PSGISEKSKSSSSFHPAPGNAQSSSQTP) are disordered.

Belongs to the type I cytokine receptor family. Type 4 subfamily. As to quaternary structure, the functional IL4 receptor is formed by initial binding of IL4 to IL4R. Subsequent recruitment to the complex of the common gamma chain, in immune cells, creates a type I receptor and, in non-immune cells, of IL13RA1 forms a type II receptor. IL4R can also interact with the IL13/IL13RA1 complex to form a similar type II receptor. Interacts with PIK3C3. Interacts with the SH2-containing phosphatases, PTPN6/SHIP1, PTPN11/SHIP2 and INPP5D/SHIP. Interacts with JAK1 through a Box 1-containing region; inhibited by SOCS5. Interacts with SOCS5; inhibits IL4 signaling. Interacts with JAK3. Interacts with CLM1. Interacts with IL13RA2. In terms of processing, on IL4 binding, phosphorylated on C-terminal tyrosine residues. Phosphorylation on any one of tyrosine residues, Tyr-575, Tyr-603 or Tyr-631, is required for STAT6-induced gene induction. The soluble form (sIL4R/IL4BP) can also be produced by proteolytic cleavage at the cell surface (shedding) by a metalloproteinase. In terms of tissue distribution, isoform 1 and isoform 2 are highly expressed in activated T-cells.

It is found in the cell membrane. It localises to the secreted. Functionally, receptor for both interleukin 4 and interleukin 13. Couples to the JAK1/2/3-STAT6 pathway. The IL4 response is involved in promoting Th2 differentiation. The IL4/IL13 responses are involved in regulating IgE production and, chemokine and mucus production at sites of allergic inflammation. In certain cell types, can signal through activation of insulin receptor substrates, IRS1/IRS2. Its function is as follows. Soluble IL4R (sIL4R) inhibits IL4-mediated cell proliferation and IL5 up-regulation by T-cells. The polypeptide is Interleukin-4 receptor subunit alpha (IL4R) (Homo sapiens (Human)).